A 655-amino-acid polypeptide reads, in one-letter code: Sphingomyelin phosphodiesterase 3 (655 aa).

At 1 to 10 the chain is on the cytoplasmic side; that stretch reads MVLYTTPFPN. The helical intramembrane region spans 11-31; the sequence is SCLSALHAVSWALIFPCYWLV. At 32-64 the chain is on the cytoplasmic side; that stretch reads DRLVASFIPTTYEKRQRADDPCYLQLFCTVLFT. 2 S-palmitoyl cysteine lipidation sites follow: Cys-53 and Cys-59. Positions 65 to 85 form an intramembrane region, helical; sequence PVYLALLVAALPFAFLGFIFW. Residues 86–655 are Cytoplasmic-facing; that stretch reads SPLQSARRPY…LMVSAGEEEA (570 aa). Position 178 is a phosphoserine (Ser-178). 2 disordered regions span residues 209–237 and 250–320; these read VEYKGDGGRHPSDEAANGPASGEQADGSL and GGRA…SNSK. Basic and acidic residues predominate over residues 211 to 221; sequence YKGDGGRHPSD. Ser-289 is subject to Phosphoserine. Mg(2+) is bound at residue Glu-362. 2 S-palmitoyl cysteine lipidation sites follow: Cys-395 and Cys-396. His-639 serves as the catalytic Proton acceptor.

This sequence belongs to the neutral sphingomyelinase family. It depends on Mg(2+) as a cofactor. Post-translationally, palmitoylated, palmitoylation-deficient proteins are targeted for lysosomal degradation. In terms of tissue distribution, in brain sections, it is restricted to neurons and especially prominent in large cells, including Purkinje cells, pyramidal cells, neurons of the dentate gyrus granular layer, and neurons in the pontine nuclei. Also present in the hypothalamic nuclei, neurons in the piriform cortex, and nuclei of the brainstem (at protein level). Mainly expressed in brain and jejunum. Weakly or not expressed in heart, spleen, lung, liver, kidney and testis.

It is found in the golgi apparatus membrane. The protein localises to the cell membrane. The enzyme catalyses a sphingomyelin + H2O = phosphocholine + an N-acylsphing-4-enine + H(+). It catalyses the reaction N-(15Z-tetracosenoyl)sphing-4-enine-1-phosphocholine + H2O = N-(15Z-tetracosenoyl)-sphing-4-enine + phosphocholine + H(+). The catalysed reaction is N-(tetracosanoyl)-sphing-4-enine-1-phosphocholine + H2O = N-tetracosanoyl-sphing-4-enine + phosphocholine + H(+). It carries out the reaction an N-(acyl)-sphingosylphosphocholine + H2O = an N-acyl-sphingoid base + phosphocholine + H(+). The enzyme catalyses 1-hexadecanoyl-sn-glycero-3-phosphocholine + H2O = 1-hexadecanoyl-sn-glycerol + phosphocholine + H(+). It catalyses the reaction 1-O-octadecyl-sn-glycero-3-phosphocholine + H2O = 1-O-octadecyl-sn-glycerol + phosphocholine + H(+). The catalysed reaction is a sphingosylphosphocholine + H2O = a sphingoid base + phosphocholine + H(+). It carries out the reaction N-(hexadecanoyl)-sphing-4-enine-1-phosphocholine + H2O = N-hexadecanoylsphing-4-enine + phosphocholine + H(+). The protein operates within lipid metabolism; sphingolipid metabolism. Inhibited by nSMase inhibitor GW4869. Binding of anionic phospholipids (APLs) such as phosphatidylserine (PS) and phosphatidic acid (PA) increases enzymatic activity. In terms of biological role, catalyzes the hydrolysis of sphingomyelin to form ceramide and phosphocholine. Ceramide mediates numerous cellular functions, such as apoptosis and growth arrest, and is capable of regulating these 2 cellular events independently. Also hydrolyzes sphingosylphosphocholine. Binds to anionic phospholipids (APLs) such as phosphatidylserine (PS) and phosphatidic acid (PA) that modulate enzymatic activity and subcellular location. Regulates the cell cycle by acting as a growth suppressor in confluent cells. Acts as a regulator of postnatal development and participates in bone and dentin mineralization. May be involved in IL-1-beta-induced JNK activation in hepatocytes. May act as a mediator in transcriptional regulation of NOS2/iNOS via the NF-kappa-B activation under inflammatory conditions. The sequence is that of Sphingomyelin phosphodiesterase 3 from Rattus norvegicus (Rat).